The sequence spans 67 residues: Epsilon-conotoxin TxVA (67 aa).

A signal peptide spans M1–C19. The propeptide occupies F20–R50. 4-carboxyglutamate occurs at positions 51 and 54. Cystine bridges form between C52–C58 and C53–C59. Position 57 is a 6'-bromotryptophan (W57). The O-linked (GalNAc...) threonine glycan is linked to T60. P63 carries the 4-hydroxyproline modification. The propeptide occupies L64–R67.

Post-translationally, O-glycan consists of the disaccharide Gal-GalNAc. In terms of tissue distribution, expressed by the venom duct.

The protein resides in the secreted. In terms of biological role, epsilon-conotoxins act at presynaptic membranes, blocking the calcium channels or G protein-coupled receptors. Causes hyperactivity upon intracranial injection into mice. Causes dorsal fins drooping in fish. The sequence is that of Epsilon-conotoxin TxVA from Conus textile (Cloth-of-gold cone).